Consider the following 419-residue polypeptide: Glucose-1-phosphate adenylyltransferase (419 aa).

Residues Tyr-106, Gly-171, 186–187, and Ser-204 each bind alpha-D-glucose 1-phosphate; that span reads EK.

The protein belongs to the bacterial/plant glucose-1-phosphate adenylyltransferase family. Homotetramer.

It carries out the reaction alpha-D-glucose 1-phosphate + ATP + H(+) = ADP-alpha-D-glucose + diphosphate. The protein operates within glycan biosynthesis; glycogen biosynthesis. Its function is as follows. Involved in the biosynthesis of ADP-glucose, a building block required for the elongation reactions to produce glycogen. Catalyzes the reaction between ATP and alpha-D-glucose 1-phosphate (G1P) to produce pyrophosphate and ADP-Glc. This chain is Glucose-1-phosphate adenylyltransferase, found in Roseobacter denitrificans (strain ATCC 33942 / OCh 114) (Erythrobacter sp. (strain OCh 114)).